A 530-amino-acid polypeptide reads, in one-letter code: MPMSLGNAFIKNFLGKAPDWYKLAIISFLIINPFVFFLVDPFVAGWLLVVEFIFTLAMALKCYPLQPGGLLAIQAVAIGMTKPEMVYHELQANLPVLLLLVFMVAGIYFMKELLLFIFTKILLGIQSKILLSVAFCVAAAFLSAFLDALTVIAVVISVAVGFYSIYHKVASGKGTTSAHDHTHDEEISELTRDDLENYRAFLRSLLMHAGVGTALGGVMTMVGEPQNLVIAKQAGWEFGEFIIRMLPVTLPVFFCGILTCALVEKFKVFGYGAELPNNVRQILVEFDNKERANRTKQDVAKLWVQSAIAVWLIVGLALHVAEVGLIGLSVIILATAFTGVIEEHSMGKAFEEALPFTALLAVFFAVVAVIIDQALFKPVIDAVLHVEDKGAQLALFYVANGILSMVSDNVFVGTVYINEVKTALVEGVITRDQFDLLAVAINTGTNLPSVATPNGQAAFLFLLTSALAPLIRLSYGRMVIMALPYTIVLALVGLAGIVFFVEPMTAWFYDAGWIIHRTGEVVAPVISGGH.

Helical transmembrane passes span 13–33 (FLGKAPDWYKLAIISFLIINP), 98–118 (LLLVFMVAGIYFMKELLLFIF), 123–145 (LGIQSKILLSVAFCVAAAFLSAF), 149–166 (LTVIAVVISVAVGFYSIY), 205–225 (LLMHAGVGTALGGVMTMVGEP), 238–258 (FGEFIIRMLPVTLPVFFCGIL), 308–328 (IAVWLIVGLALHVAEVGLIGL), 330–350 (VIILATAFTGVIEEHSMGKAF), 356–376 (FTALLAVFFAVVAVIIDQALF), 393–413 (LALFYVANGILSMVSDNVFVG), 451–471 (ATPNGQAAFLFLLTSALAPLI), and 480–500 (IMALPYTIVLALVGLAGIVFF).

The protein belongs to the NhaB Na(+)/H(+) (TC 2.A.34) antiporter family.

The protein resides in the cell inner membrane. It catalyses the reaction 2 Na(+)(in) + 3 H(+)(out) = 2 Na(+)(out) + 3 H(+)(in). Functionally, na(+)/H(+) antiporter that extrudes sodium in exchange for external protons. The polypeptide is Na(+)/H(+) antiporter NhaB (Vibrio atlanticus (strain LGP32) (Vibrio splendidus (strain Mel32))).